A 533-amino-acid polypeptide reads, in one-letter code: D-3-phosphoglycerate dehydrogenase (533 aa).

Position 2 is an N-acetylalanine (Ala2). Residue Ser14 is modified to Phosphoserine. An N6-acetyllysine; alternate modification is found at Lys21. Lys21 is covalently cross-linked (Glycyl lysine isopeptide (Lys-Gly) (interchain with G-Cter in SUMO1); alternate). Residue Lys21 forms a Glycyl lysine isopeptide (Lys-Gly) (interchain with G-Cter in SUMO2); alternate linkage. Residue Lys58 is modified to N6-acetyllysine. Residues Thr78, 155–156 (RI), Asp175, Thr207, 234–236 (CAR), and Asp260 contribute to the NAD(+) site. Thr78 carries the post-translational modification Phosphothreonine. Arg236 is an active-site residue. Glu265 is an active-site residue. His283 acts as the Proton donor in catalysis. 283–286 (HLGA) is a binding site for NAD(+).

It belongs to the D-isomer specific 2-hydroxyacid dehydrogenase family. As to quaternary structure, homotetramer. Liver, kidney, brain, testis.

It catalyses the reaction (2R)-3-phosphoglycerate + NAD(+) = 3-phosphooxypyruvate + NADH + H(+). Its pathway is amino-acid biosynthesis; L-serine biosynthesis; L-serine from 3-phospho-D-glycerate: step 1/3. Functionally, catalyzes the reversible oxidation of 3-phospho-D-glycerate to 3-phosphonooxypyruvate, the first step of the phosphorylated L-serine biosynthesis pathway. Does not catalyze the reversible oxidation of 2-hydroxyglutarate to 2-oxoglutarate and the reversible oxidation of (S)-malate to oxaloacetate. This chain is D-3-phosphoglycerate dehydrogenase (Phgdh), found in Rattus norvegicus (Rat).